Here is a 258-residue protein sequence, read N- to C-terminus: Imidazole glycerol phosphate synthase subunit HisF (258 aa).

Catalysis depends on residues D11 and D130.

It belongs to the HisA/HisF family. Heterodimer of HisH and HisF.

It is found in the cytoplasm. It catalyses the reaction 5-[(5-phospho-1-deoxy-D-ribulos-1-ylimino)methylamino]-1-(5-phospho-beta-D-ribosyl)imidazole-4-carboxamide + L-glutamine = D-erythro-1-(imidazol-4-yl)glycerol 3-phosphate + 5-amino-1-(5-phospho-beta-D-ribosyl)imidazole-4-carboxamide + L-glutamate + H(+). Its pathway is amino-acid biosynthesis; L-histidine biosynthesis; L-histidine from 5-phospho-alpha-D-ribose 1-diphosphate: step 5/9. IGPS catalyzes the conversion of PRFAR and glutamine to IGP, AICAR and glutamate. The HisF subunit catalyzes the cyclization activity that produces IGP and AICAR from PRFAR using the ammonia provided by the HisH subunit. This chain is Imidazole glycerol phosphate synthase subunit HisF, found in Rhodospirillum centenum (strain ATCC 51521 / SW).